The following is a 550-amino-acid chain: Probable acyl-activating enzyme 6 (550 aa).

The protein belongs to the ATP-dependent AMP-binding enzyme family. Expressed at low levels in roots, leaves, stems and developing seeds.

In terms of biological role, may act as an acid--thiol ligase that activates carboxylic acids by forming acyl-CoAs. This is Probable acyl-activating enzyme 6 (AAE6) from Arabidopsis thaliana (Mouse-ear cress).